A 480-amino-acid chain; its full sequence is Gamma-aminobutyric acid receptor subunit rho-1 (480 aa).

An N-terminal signal peptide occupies residues 1-21 (MLAVRNMKFGIFLLWWGWVLA). Residues 22–281 (AESTVHWPGR…LYINFTLRRH (260 aa)) lie on the Extracellular side of the membrane. The interval 31–67 (REVHEPSKKGSRPQRQRRGAHDDAHKQGSPILKRSSD) is disordered. The span at 39–48 (KGSRPQRQRR) shows a compositional bias: basic residues. Arg-126 is a binding site for 4-aminobutanoate. The N-linked (GlcNAc...) asparagine glycan is linked to Asn-141. Ser-190 lines the 4-aminobutanoate pocket. Cysteines 199 and 213 form a disulfide. Residue Glu-218 coordinates 4-aminobutanoate. N-linked (GlcNAc...) asparagine glycosylation is found at Asn-235 and Asn-275. The helical transmembrane segment at 282–302 (IFFFLLQTYFPATLMVMLSWV) threads the bilayer. At 303–314 (SFWIDRRAVPAR) the chain is on the cytoplasmic side. The chain crosses the membrane as a helical span at residues 315-335 (VPLGITTVLTMSTIITGVNAS). Residues 336-346 (MPRVSYIKAVD) are Extracellular-facing. A helical transmembrane segment spans residues 347-367 (IYLWVSFVFVFLSVLEYAAVN). Residues 368–458 (YLTTVQERKE…MRINTHAIDK (91 aa)) are Cytoplasmic-facing. Residues 459 to 479 (YSRIIFPAAYILFNLIYWSIF) traverse the membrane as a helical segment. Residue Ser-480 is a topological domain, extracellular.

It belongs to the ligand-gated ion channel (TC 1.A.9) family. Gamma-aminobutyric acid receptor (TC 1.A.9.5) subfamily. GABRR1 sub-subfamily. Three rho subunits (rho-1/GBRR1, rho-2/GBRR2 and rho-3/GBRR3) coassemble either to form functional homopentamers or heteropentamers. Rho-1/GBRR1 subunits can also associate with alpha-1/GBRA1 subunits to form a functional GABAAR. Interacts with SQSTM1.

It localises to the postsynaptic cell membrane. It is found in the cell membrane. It carries out the reaction chloride(in) = chloride(out). Inhibited by TPMPA, a rho-specific antagonist. Inhibited by picrotoxin, when forming a homopentamer. In contrast with other GABAARs, rho-1 GABAAR is not inhibited by bicuculline, when forming a homopentamer. Down-regulated by external protons when forming a homopentamer. Functionally, rho subunit of the pentameric ligand-gated chloride channels responsible for mediating the effects of gamma-aminobutyric acid (GABA), the major inhibitory neurotransmitter in the brain. Rho-containing GABA-gated chloride channels are a subclass of GABA(A) receptors (GABAARs) entirely composed of rho subunits, where GABA molecules bind at the rho intersubunit interfaces. When activated by GABA, rho-GABAARs selectively allow the flow of chloride anions across the cell membrane down their electrochemical gradient. Rho-1 subunits are primarily expressed in retina where rho-1-containing GABAARs may play a role in retinal neurotransmission. Rho-1 GABAARs are also involved in neuronal tonic (extrasynaptic) and phasic (synaptic) transmission in the Purkinje neurons of the cerebellum. Rho-1 GABAARs may also contribute to the regulation of glial development in the cerebellum by controlling extrasynaptic transmission. The chain is Gamma-aminobutyric acid receptor subunit rho-1 from Rattus norvegicus (Rat).